Reading from the N-terminus, the 327-residue chain is 2-oxoisovalerate dehydrogenase subunit beta (327 aa).

Thiamine diphosphate contacts are provided by residues Glu29, 58-60, Gln82, and 86-89; these read LAE and FIMP. Substrate-binding positions include 83–86 and His129; that span reads FADF. Catalysis depends on His129, which acts as the Proton acceptor.

In terms of assembly, heterotetramer of two alpha and two beta chains. Directly associated with ODBA in the E1 complex. Requires thiamine diphosphate as cofactor.

The enzyme catalyses N(6)-[(R)-lipoyl]-L-lysyl-[protein] + 3-methyl-2-oxobutanoate + H(+) = N(6)-[(R)-S(8)-2-methylpropanoyldihydrolipoyl]-L-lysyl-[protein] + CO2. The branched-chain alpha-keto dehydrogenase complex catalyzes the overall conversion of alpha-keto acids to acyl-CoA and CO(2). It contains multiple copies of three enzymatic components: branched-chain alpha-keto acid decarboxylase (E1), lipoamide acyltransferase (E2) and lipoamide dehydrogenase (E3). The sequence is that of 2-oxoisovalerate dehydrogenase subunit beta (bfmBAB) from Bacillus subtilis (strain 168).